A 342-amino-acid chain; its full sequence is uncharacterized protein (342 aa).

The protein belongs to the proline racemase family.

This is an uncharacterized protein from Brucella canis (strain ATCC 23365 / NCTC 10854 / RM-666).